The chain runs to 181 residues: uncharacterized protein (181 aa).

Positions 151–181 (AQKKKDFQEPENKHEQLTSTKAPCQENWSDF) are disordered. Residues 154–166 (KKDFQEPENKHEQ) are compositionally biased toward basic and acidic residues. A compositionally biased stretch (polar residues) spans 167–181 (LTSTKAPCQENWSDF).

This is an uncharacterized protein from Caenorhabditis elegans.